The following is a 272-amino-acid chain: Large ribosomal subunit protein uL3 (272 aa).

The segment at 125-146 (QHIGPKSHGGGGGSQPLRQTGS) is disordered.

Belongs to the universal ribosomal protein uL3 family. As to quaternary structure, part of the 50S ribosomal subunit. Forms a cluster with proteins L14 and L19.

In terms of biological role, one of the primary rRNA binding proteins, it binds directly near the 3'-end of the 23S rRNA, where it nucleates assembly of the 50S subunit. The sequence is that of Large ribosomal subunit protein uL3 from Metamycoplasma arthritidis (strain 158L3-1) (Mycoplasma arthritidis).